Here is a 384-residue protein sequence, read N- to C-terminus: Guanine nucleotide-binding protein alpha-1 subunit (384 aa).

Positions 1–22 (MGSLCSRNKHYSQADDEENTQT) are disordered. G2 is lipidated: N-myristoyl glycine. A lipid anchor (S-palmitoyl cysteine) is attached at C5. A G-alpha domain is found at 38 to 384 (HIQKLLLLGA…RRNLFEAGLL (347 aa)). The interval 41 to 54 (KLLLLGAGDSGKST) is G1 motif. D49, S50, G51, K52, S53, T54, D163, L188, T194, G222, N288, K289, D291, and A356 together coordinate GTP. S53 serves as a coordination point for Mg(2+). The segment at 186–194 (DVLFARIRT) is G2 motif. T194 is a Mg(2+) binding site. The segment at 215 to 224 (YRLFDVGGQR) is G3 motif. Residues 284–291 (MLFLNKFD) form a G4 motif region. Residues 354–359 (TTALDQ) are G5 motif.

This sequence belongs to the G-alpha family. G proteins are composed of 3 units; alpha, beta and gamma. The alpha chain contains the guanine nucleotide binding site. The cofactor is Mg(2+).

Guanine nucleotide-binding proteins (G proteins) are involved as modulators or transducers in various transmembrane signaling systems. The sequence is that of Guanine nucleotide-binding protein alpha-1 subunit (GPA1) from Solanum tuberosum (Potato).